The following is a 229-amino-acid chain: Interleukin-27 subunit beta (229 aa).

The signal sequence occupies residues methionine 1–glycine 20. Fibronectin type-III domains are found at residues proline 24 to aspartate 130 and proline 131 to leucine 227. Asparagine 55 and asparagine 105 each carry an N-linked (GlcNAc...) asparagine glycan.

This sequence belongs to the type I cytokine receptor family. Type 3 subfamily. Heterodimer with IL27/IL27A; not disulfide-linked. This heterodimer is known as interleukin IL-27. Heterodimer with IL12A; not disulfide-linked. This heterodimer is known as interleukin IL-35. Interacts with SQSTM1.

The protein resides in the secreted. Its function is as follows. Associates with IL27 to form the IL-27 interleukin, a heterodimeric cytokine which functions in innate immunity. IL-27 has pro- and anti-inflammatory properties, that can regulate T-helper cell development, suppress T-cell proliferation, stimulate cytotoxic T-cell activity, induce isotype switching in B-cells, and that has diverse effects on innate immune cells. Among its target cells are CD4 T-helper cells which can differentiate in type 1 effector cells (TH1), type 2 effector cells (TH2) and IL17 producing helper T-cells (TH17). It drives rapid clonal expansion of naive but not memory CD4 T-cells. It also strongly synergizes with IL-12 to trigger interferon-gamma/IFN-gamma production of naive CD4 T-cells, binds to the cytokine receptor WSX-1/TCCR. Another important role of IL-27 is its antitumor activity as well as its antiangiogenic activity with activation of production of antiangiogenic chemokines. This is Interleukin-27 subunit beta (EBI3) from Homo sapiens (Human).